A 307-amino-acid polypeptide reads, in one-letter code: Methionyl-tRNA formyltransferase (307 aa).

108-111 is a binding site for (6S)-5,6,7,8-tetrahydrofolate; it reads SLLP.

The protein belongs to the Fmt family.

It catalyses the reaction L-methionyl-tRNA(fMet) + (6R)-10-formyltetrahydrofolate = N-formyl-L-methionyl-tRNA(fMet) + (6S)-5,6,7,8-tetrahydrofolate + H(+). Its function is as follows. Attaches a formyl group to the free amino group of methionyl-tRNA(fMet). The formyl group appears to play a dual role in the initiator identity of N-formylmethionyl-tRNA by promoting its recognition by IF2 and preventing the misappropriation of this tRNA by the elongation apparatus. The sequence is that of Methionyl-tRNA formyltransferase from Renibacterium salmoninarum (strain ATCC 33209 / DSM 20767 / JCM 11484 / NBRC 15589 / NCIMB 2235).